Here is a 568-residue protein sequence, read N- to C-terminus: Sesquiterpene synthase 14 (568 aa).

Positions 319, 323, 463, and 471 each coordinate Mg(2+). Positions 319–323 (DDLYD) match the DDXXD motif motif.

The protein belongs to the terpene synthase family. Tpsa subfamily. It depends on Mg(2+) as a cofactor. Mn(2+) is required as a cofactor. In terms of tissue distribution, mostly expressed in roots, to a lower extent in flowers and, at low levels, in fruits.

It catalyses the reaction (2Z,6Z)-farnesyl diphosphate = (E)-alpha-bisabolene + diphosphate. The enzyme catalyses (2Z,6Z)-farnesyl diphosphate = beta-bisabolene + diphosphate. The catalysed reaction is (2E,6E)-farnesyl diphosphate = beta-bisabolene + diphosphate. It carries out the reaction (2E,6E)-farnesyl diphosphate = (Z)-gamma-bisabolene + diphosphate. It catalyses the reaction (2E,6E)-farnesyl diphosphate = (E)-gamma-bisabolene + diphosphate. The enzyme catalyses (2Z,6Z)-farnesyl diphosphate = (E)-gamma-bisabolene + diphosphate. It functions in the pathway secondary metabolite biosynthesis; terpenoid biosynthesis. Sesquiterpene synthase involved in the biosynthesis of volatile compounds. Mediates the conversion of (2E,6E)-farnesyl diphosphate ((EE)-FPP) into beta-bisabolene, and of (2Z,6Z)-farnesyl diphosphate ((ZZ)-FPP) into alpha-bisabolene, but also smaller amounts of (Z)-gamma-bisabolene, (E)-gamma-bisabolene and nerolidol. The protein is Sesquiterpene synthase 14 of Solanum lycopersicum (Tomato).